We begin with the raw amino-acid sequence, 505 residues long: MDLLLLEKTLLALFLAAITAITISKLRGKPFKLPPGPFPVPVFGNWLQVGDDLNHRNLTDLAKRFAEILLLRMEQRNLVVISSPELAKEVLHTQGVEFGSRTRNVVFDIFTGKGQDIVFTVYGEHWRKMRRIMTVPFFTNKVVQQYRFGWESEAASVVDDVKKNSKASVNGIVIRRRLQLMMYNIMYRIMFDRRFESEEDPLFVKLKALNGERSRLAQSFEYNYGDFIPILRPFLKGYLKVCKEVKDRRLQLFKDYFVDERKKLGSTKSTYNEGLKCAIDHILDAQKKGEINDDNVLYIVENINVAAIETTLWSIEWGIAELVNHQEIQNKLREEMDKVLGPGHQVTEPDLEKLPYLQAVIKETLRLRMAIPLLVPHMNLHDAKLGGFDIPAESKILVNAWWLANNPALWKKPEEFRPERFLEEEAHVEANGNDFRYLPFGVGRRSCPGIILALPILGITIGRLVQNFELLPPPGQSKIDTSEKGGQFSLHILKHSTIVAKPRAF.

Residues 3-23 (LLLLEKTLLALFLAAITAITI) form a helical membrane-spanning segment. (E)-cinnamate contacts are provided by residues 213–218 (RSRLAQ) and alanine 306. Heme is bound at residue cysteine 447.

This sequence belongs to the cytochrome P450 family. The cofactor is heme.

It localises to the membrane. It catalyses the reaction (E)-cinnamate + reduced [NADPH--hemoprotein reductase] + O2 = (E)-4-coumarate + oxidized [NADPH--hemoprotein reductase] + H2O + H(+). The protein operates within phenylpropanoid metabolism; trans-4-coumarate biosynthesis; trans-4-coumarate from trans-cinnamate: step 1/1. In terms of biological role, catalyzes the first oxidative step of the phenylpropanoid pathway in higher plants by transforming trans-cinnamate into p-coumarate. The compounds formed by this pathway are essential components for lignification, pollination, and defense against ultraviolet light, predators and pathogens. This is Trans-cinnamate 4-monooxygenase (CYP73A9) from Pisum sativum (Garden pea).